The chain runs to 1388 residues: CRISPR-associated endonuclease Cas9 2 (1388 aa).

Asp-10 acts as the For RuvC-like nuclease domain in catalysis. Asp-10, Glu-763, and Glu-767 together coordinate Mg(2+). One can recognise an HNH Cas9-type domain in the interval 771 to 928 (TNQGKSNSQQ…DKAGFIQRQL (158 aa)). His-847 functions as the Proton acceptor for HNH nuclease domain in the catalytic mechanism. Position 990 (His-990) interacts with Mg(2+). Residues 1100–1109 (EQNHGLDRGK) show a composition bias toward basic and acidic residues. Residues 1100–1130 (EQNHGLDRGKPKGLFNANLSSKPKPNSNENL) form a disordered region. Positions 1102 to 1388 (NHGLDRGKPK…RIDLAKLGEG (287 aa)) are PAM-interacting domain (PI). A compositionally biased stretch (polar residues) spans 1116 to 1129 (ANLSSKPKPNSNEN).

It belongs to the CRISPR-associated protein Cas9 family. Subtype II-A subfamily. In terms of assembly, monomer. Binds crRNA and tracrRNA. Requires Mg(2+) as cofactor.

CRISPR (clustered regularly interspaced short palindromic repeat) is an adaptive immune system that provides protection against mobile genetic elements (viruses, transposable elements and conjugative plasmids). CRISPR clusters contain spacers, sequences complementary to antecedent mobile elements, and target invading nucleic acids. CRISPR clusters are transcribed and processed into CRISPR RNA (crRNA). In type II CRISPR systems correct processing of pre-crRNA requires a trans-encoded small RNA (tracrRNA), endogenous ribonuclease 3 (rnc) and this protein. The tracrRNA serves as a guide for ribonuclease 3-aided processing of pre-crRNA. Subsequently Cas9/crRNA/tracrRNA endonucleolytically cleaves linear or circular dsDNA target complementary to the spacer yielding blunt ends; Cas9 is inactive in the absence of the 2 guide RNAs (gRNA). Cas9 recognizes a 3'-G-rich protospacer adjacent motif (PAM, GGG in this organism) in the CRISPR repeat sequences to help distinguish self versus nonself, as targets within the bacterial CRISPR locus do not have PAMs. PAM recognition is also required for catalytic activity. Complements the gRNA coprocessing defect in a cas9 deletion in S.pyogenes strain 370, and cuts target DNA in Cas9:gRNAs mixing experiments with S.mutans strain UA159. The polypeptide is CRISPR-associated endonuclease Cas9 2 (Streptococcus thermophilus (strain ATCC BAA-491 / LMD-9)).